A 552-amino-acid chain; its full sequence is 5'-AMP-activated protein kinase catalytic subunit alpha-2 (552 aa).

Positions 16 to 268 (YVLGDTLGVG…IKDIREHEWF (253 aa)) constitute a Protein kinase domain. ATP is bound by residues 22–30 (LGVGTFGKV) and Lys-45. Asp-139 (proton acceptor) is an active-site residue. At Thr-172 the chain carries Phosphothreonine; by LKB1 and CaMKK2. The residue at position 258 (Thr-258) is a Phosphothreonine. The tract at residues 291–376 (EAVKEVCEKF…PERMPPLIAD (86 aa)) is AIS. Ser-377 carries the phosphoserine modification. Residues 478–520 (EQRSGSSTPQRSCSAAGLHRPRSSVDSSTAENHSLSGSLTGSL) form a disordered region. Residues 480–490 (RSGSSTPQRSC) show a composition bias toward polar residues. The residue at position 491 (Ser-491) is a Phosphoserine. Residues 501 to 510 (SVDSSTAENH) show a composition bias toward polar residues. The segment covering 511 to 520 (SLSGSLTGSL) has biased composition (low complexity).

It belongs to the protein kinase superfamily. CAMK Ser/Thr protein kinase family. SNF1 subfamily. As to quaternary structure, AMPK is a heterotrimer of an alpha catalytic subunit (PRKAA1 or PRKAA2), a beta (PRKAB1 or PRKAB2) and a gamma non-catalytic subunits (PRKAG1, PRKAG2 or PRKAG3). Interacts with FNIP1 and FNIP2. Associates with internalized INSR complexes on Golgi/endosomal membranes; PRKAA2/AMPK2 together with ATIC and HACD3/PTPLAD1 is proposed to be part of a signaling network regulating INSR autophosphorylation and endocytosis. Interacts with DUSP29. Interacts with ARF6. The phosphorylated form at Thr-172 mediated by CamKK2 interacts with ACSS2. It depends on Mg(2+) as a cofactor. In terms of processing, ubiquitinated. Phosphorylated at Thr-172 by STK11/LKB1 in complex with STE20-related adapter-alpha (STRADA) pseudo kinase and CAB39. Also phosphorylated at Thr-172 by CAMKK2; triggered by a rise in intracellular calcium ions, without detectable changes in the AMP/ATP ratio. CAMKK1 can also phosphorylate Thr-172, but at much lower level. Dephosphorylated by protein phosphatase 2A and 2C (PP2A and PP2C). Phosphorylated by ULK1; leading to negatively regulate AMPK activity and suggesting the existence of a regulatory feedback loop between ULK1 and AMPK. Dephosphorylated by PPM1A and PPM1B at Thr-172 (mediated by STK11/LKB1). As to expression, skeletal muscle, lower levels in liver, heart and kidney.

The protein localises to the cytoplasm. It localises to the nucleus. It catalyses the reaction L-seryl-[protein] + ATP = O-phospho-L-seryl-[protein] + ADP + H(+). The enzyme catalyses L-threonyl-[protein] + ATP = O-phospho-L-threonyl-[protein] + ADP + H(+). The catalysed reaction is L-seryl-[acetyl-CoA carboxylase] + ATP = O-phospho-L-seryl-[acetyl-CoA carboxylase] + ADP + H(+). It carries out the reaction L-seryl-[3-hydroxy-3-methylglutaryl-coenzyme A reductase] + ATP = O-phospho-L-seryl-[3-hydroxy-3-methylglutaryl-coenzyme A reductase] + ADP + H(+). Activated by phosphorylation on Thr-172. Binding of AMP to non-catalytic gamma subunit (PRKAG1, PRKAG2 or PRKAG3) results in allosteric activation, inducing phosphorylation on Thr-172. AMP-binding to gamma subunit also sustains activity by preventing dephosphorylation of Thr-172. ADP also stimulates Thr-172 phosphorylation, without stimulating already phosphorylated AMPK. ATP promotes dephosphorylation of Thr-172, rendering the enzyme inactive. Under physiological conditions AMPK mainly exists in its inactive form in complex with ATP, which is much more abundant than AMP. Selectively inhibited by compound C (6-[4-(2-Piperidin-1-yl-ethoxy)-phenyl)]-3-pyridin-4-yl-pyyrazolo[1,5-a] pyrimidine. Activated by resveratrol, a natural polyphenol present in red wine, and S17834, a synthetic polyphenol. Salicylate/aspirin directly activates kinase activity, primarily by inhibiting Thr-172 dephosphorylation. Its function is as follows. Catalytic subunit of AMP-activated protein kinase (AMPK), an energy sensor protein kinase that plays a key role in regulating cellular energy metabolism. In response to reduction of intracellular ATP levels, AMPK activates energy-producing pathways and inhibits energy-consuming processes: inhibits protein, carbohydrate and lipid biosynthesis, as well as cell growth and proliferation. AMPK acts via direct phosphorylation of metabolic enzymes, and by longer-term effects via phosphorylation of transcription regulators. Regulates lipid synthesis by phosphorylating and inactivating lipid metabolic enzymes such as ACACA, ACACB, GYS1, HMGCR and LIPE; regulates fatty acid and cholesterol synthesis by phosphorylating acetyl-CoA carboxylase (ACACA and ACACB) and hormone-sensitive lipase (LIPE) enzymes, respectively. Promotes lipolysis of lipid droplets by mediating phosphorylation of isoform 1 of CHKA (CHKalpha2). Regulates insulin-signaling and glycolysis by phosphorylating IRS1, PFKFB2 and PFKFB3. Involved in insulin receptor/INSR internalization. AMPK stimulates glucose uptake in muscle by increasing the translocation of the glucose transporter SLC2A4/GLUT4 to the plasma membrane, possibly by mediating phosphorylation of TBC1D4/AS160. Regulates transcription and chromatin structure by phosphorylating transcription regulators involved in energy metabolism such as CRTC2/TORC2, FOXO3, histone H2B, HDAC5, MEF2C, MLXIPL/ChREBP, EP300, HNF4A, p53/TP53, SREBF1, SREBF2 and PPARGC1A. Acts as a key regulator of glucose homeostasis in liver by phosphorylating CRTC2/TORC2, leading to CRTC2/TORC2 sequestration in the cytoplasm. In response to stress, phosphorylates 'Ser-36' of histone H2B (H2BS36ph), leading to promote transcription. Acts as a key regulator of cell growth and proliferation by phosphorylating FNIP1, TSC2, RPTOR, WDR24 and ATG1/ULK1: in response to nutrient limitation, negatively regulates the mTORC1 complex by phosphorylating RPTOR component of the mTORC1 complex and by phosphorylating and activating TSC2. Also phosphorylates and inhibits GATOR2 subunit WDR24 in response to nutrient limitation, leading to suppress glucose-mediated mTORC1 activation. In response to energetic stress, phosphorylates FNIP1, inactivating the non-canonical mTORC1 signaling, thereby promoting nuclear translocation of TFEB and TFE3, and inducing transcription of lysosomal or autophagy genes. In response to nutrient limitation, promotes autophagy by phosphorylating and activating ATG1/ULK1. In that process, it also activates WDR45/WIPI4. Phosphorylates CASP6, thereby preventing its autoprocessing and subsequent activation. AMPK also acts as a regulator of circadian rhythm by mediating phosphorylation of CRY1, leading to destabilize it. May regulate the Wnt signaling pathway by phosphorylating CTNNB1, leading to stabilize it. Also acts as a regulator of cellular polarity by remodeling the actin cytoskeleton; probably by indirectly activating myosin. Also phosphorylates CFTR, EEF2K, KLC1, NOS3 and SLC12A1. Plays an important role in the differential regulation of pro-autophagy (composed of PIK3C3, BECN1, PIK3R4 and UVRAG or ATG14) and non-autophagy (composed of PIK3C3, BECN1 and PIK3R4) complexes, in response to glucose starvation. Can inhibit the non-autophagy complex by phosphorylating PIK3C3 and can activate the pro-autophagy complex by phosphorylating BECN1. Upon glucose starvation, promotes ARF6 activation in a kinase-independent manner leading to cell migration. Upon glucose deprivation mediates the phosphorylation of ACSS2 at 'Ser-659', which exposes the nuclear localization signal of ACSS2, required for its interaction with KPNA1 and nuclear translocation. Upon stress, regulates mitochondrial fragmentation through phosphorylation of MTFR1L. The sequence is that of 5'-AMP-activated protein kinase catalytic subunit alpha-2 (Prkaa2) from Rattus norvegicus (Rat).